The chain runs to 510 residues: ATP synthase subunit alpha (510 aa).

169–176 (GDRQTGKT) is an ATP binding site.

The protein belongs to the ATPase alpha/beta chains family. F-type ATPases have 2 components, CF(1) - the catalytic core - and CF(0) - the membrane proton channel. CF(1) has five subunits: alpha(3), beta(3), gamma(1), delta(1), epsilon(1). CF(0) has three main subunits: a(1), b(2) and c(9-12). The alpha and beta chains form an alternating ring which encloses part of the gamma chain. CF(1) is attached to CF(0) by a central stalk formed by the gamma and epsilon chains, while a peripheral stalk is formed by the delta and b chains.

The protein localises to the cell inner membrane. The enzyme catalyses ATP + H2O + 4 H(+)(in) = ADP + phosphate + 5 H(+)(out). Produces ATP from ADP in the presence of a proton gradient across the membrane. The alpha chain is a regulatory subunit. The sequence is that of ATP synthase subunit alpha from Rickettsia peacockii (strain Rustic).